A 329-amino-acid polypeptide reads, in one-letter code: NAC domain-containing protein 79 (329 aa).

The 151-residue stretch at 17–167 (LPPGFRFHPT…EWVICRVFHK (151 aa)) folds into the NAC domain. Residues 114–173 (VGMKKTLVFYRGRAPKGQKTNWVMHEYRLDGKLSAHNLPKTAKNEWVICRVFHKTAGGKK) mediate DNA binding.

As to expression, expressed at low levels in leaves.

The protein resides in the nucleus. The polypeptide is NAC domain-containing protein 79 (Arabidopsis thaliana (Mouse-ear cress)).